A 322-amino-acid polypeptide reads, in one-letter code: Ferrochelatase (322 aa).

Fe cation contacts are provided by His193 and Glu274.

It belongs to the ferrochelatase family.

The protein resides in the cytoplasm. The enzyme catalyses heme b + 2 H(+) = protoporphyrin IX + Fe(2+). Its pathway is porphyrin-containing compound metabolism; protoheme biosynthesis; protoheme from protoporphyrin-IX: step 1/1. Its function is as follows. Catalyzes the ferrous insertion into protoporphyrin IX. In Photobacterium profundum (strain SS9), this protein is Ferrochelatase.